The primary structure comprises 462 residues: Transcription factor-like protein EUC1 (462 aa).

Disordered stretches follow at residues 11–43 (GFGG…TTSP) and 66–97 (RPTD…GRIK). S17 and S23 each carry phosphoserine. A compositionally biased stretch (basic and acidic residues) spans 26-35 (DSERRNHDLG). The tract at residues 81 to 140 (SASATEPTNRIGPGRIKETPETNFNAFLIAQLTRMEEQNANLKEEISLMKKEQELFFLEN) is homodimerization region. Residues 105-135 (NAFLIAQLTRMEEQNANLKEEISLMKKEQEL) are a coiled coil. Disordered stretches follow at residues 190–214 (QEAA…STNW) and 226–289 (GDPR…RNRR). Polar residues predominate over residues 197–214 (NPSTSTQAHQSQSRSTNW). A Glycyl lysine isopeptide (Lys-Gly) (interchain with G-Cter in SUMO) cross-link involves residue K231. 2 positions are modified to phosphoserine: S237 and S249. A compositionally biased stretch (acidic residues) spans 240 to 251 (ENGEYDGNESDE). Residues 252 to 282 (NATTRNLPLNNPDSVSNADDSNNQLDGTGNE) are compositionally biased toward polar residues. The residue at position 254 (T254) is a Phosphothreonine. The interval 296 to 385 (YKLNRAIQNV…QAIKVVENIR (90 aa)) is GCR1 DNA-binding region. Positions 441-455 (SLQQPHSIPNSSTGT) are enriched in polar residues. The segment at 441–462 (SLQQPHSIPNSSTGTPEHDQDT) is disordered.

As to quaternary structure, homodimer. Interacts with SLX5. Sumoylated at Lys-231 and subsequently ubiquitinated by the SUMO-targeted ubiquitin ligase (STUbL) complex SLX5/SLX8.

It is found in the chromosome. In terms of biological role, transcription factor-like protein that binds to specific DNA motifs called ub-HS-motif associated with several locations where proteins other than histone H2B are ubiquitinated (ub-hotspots). Ubiquitination at these sites depends on the SUMO-targeted ubiquitin ligase (STUbL) complex SLX5/SLX8 and protein turnover on the CDC48 segregase. UBC9, SIZ1, or SIZ2 sumoylate DNA-bound EUC1 to stabilize its DNA-binding. Sumoylated EUC1 acts a cofactor required for the recruitment of the SLX5/SLX8 STUbL complex via specific contacts between EUC1 and SLX5, as well as an additional SUMO-mediated interaction. SLX5/SLX8 then ubiquitinates EUC1 and presumably other targets at ub-hotspots, and the CDC48/UFD1/NPL4 complex, together with UBX4 and UBX5, removes Lys-48-linked ubiquitinated proteins from chromatin. Ubiquitinated proteins could be either degraded by the proteasome or recycled by deubiquitination. EUC1 itself does not seem to underlie extensive turnover, as it is a very stable protein. EUC1 is able to act as a transcription factor, but its function at ub-hotspots does not seem to depend on this ability. EUC1-mediated ub-hotspots are crucial during stress responses when gene expression control is impaired. This is Transcription factor-like protein EUC1 from Saccharomyces cerevisiae (strain ATCC 204508 / S288c) (Baker's yeast).